The following is a 901-amino-acid chain: HTH-type transcriptional regulator MalT (901 aa).

Position 39-46 (39-46 (SPAGYGKT)) interacts with ATP. The region spanning 829 to 894 (ELIRTSPLTQ…DAVQHAQQLL (66 aa)) is the HTH luxR-type domain. The segment at residues 853-872 (NEQIAGELEVAATTIKTHIR) is a DNA-binding region (H-T-H motif).

Belongs to the MalT family. As to quaternary structure, monomer in solution. Oligomerizes to an active state in the presence of the positive effectors ATP and maltotriose.

Activated by ATP and maltotriose, which are both required for DNA binding. Its function is as follows. Positively regulates the transcription of the maltose regulon whose gene products are responsible for uptake and catabolism of malto-oligosaccharides. Specifically binds to the promoter region of its target genes, recognizing a short DNA motif called the MalT box. The sequence is that of HTH-type transcriptional regulator MalT from Escherichia coli (strain ATCC 8739 / DSM 1576 / NBRC 3972 / NCIMB 8545 / WDCM 00012 / Crooks).